The primary structure comprises 409 residues: L-cysteine:1D-myo-inositol 2-amino-2-deoxy-alpha-D-glucopyranoside ligase (409 aa).

Cysteine 43 is a Zn(2+) binding site. L-cysteinyl-5'-AMP contacts are provided by residues 43–46 (CGIT), threonine 58, and 81–83 (NVT). Positions 45 to 55 (ITPYDATHMGH) match the 'HIGH' region motif. The 'ERGGDP' region signature appears at 183 to 188 (ERGGDP). Residue tryptophan 224 participates in L-cysteinyl-5'-AMP binding. Cysteine 228 provides a ligand contact to Zn(2+). 246 to 248 (GSD) serves as a coordination point for L-cysteinyl-5'-AMP. Histidine 253 contacts Zn(2+). Valine 280 lines the L-cysteinyl-5'-AMP pocket. Residues 286 to 290 (KMSKS) carry the 'KMSKS' region motif.

Belongs to the class-I aminoacyl-tRNA synthetase family. MshC subfamily. As to quaternary structure, monomer. Zn(2+) is required as a cofactor.

It carries out the reaction 1D-myo-inositol 2-amino-2-deoxy-alpha-D-glucopyranoside + L-cysteine + ATP = 1D-myo-inositol 2-(L-cysteinylamino)-2-deoxy-alpha-D-glucopyranoside + AMP + diphosphate + H(+). Its function is as follows. Catalyzes the ATP-dependent condensation of GlcN-Ins and L-cysteine to form L-Cys-GlcN-Ins. The chain is L-cysteine:1D-myo-inositol 2-amino-2-deoxy-alpha-D-glucopyranoside ligase (mshC) from Streptomyces avermitilis (strain ATCC 31267 / DSM 46492 / JCM 5070 / NBRC 14893 / NCIMB 12804 / NRRL 8165 / MA-4680).